Here is a 504-residue protein sequence, read N- to C-terminus: Ribosomal protein uS12 methylthiotransferase RimO (504 aa).

Residues 19–135 (KKVGFVSLGC…ILAASGIEPR (117 aa)) enclose the MTTase N-terminal domain. [4Fe-4S] cluster-binding residues include C28, C64, C98, C214, C218, and C221. The Radical SAM core domain maps to 200 to 430 (ATPKYMAYIK…MSLQKQISKK (231 aa)). One can recognise a TRAM domain in the interval 433-504 (KALIGREFDV…HDYDLVARLL (72 aa)).

This sequence belongs to the methylthiotransferase family. RimO subfamily. The cofactor is [4Fe-4S] cluster.

It localises to the cytoplasm. It carries out the reaction L-aspartate(89)-[ribosomal protein uS12]-hydrogen + (sulfur carrier)-SH + AH2 + 2 S-adenosyl-L-methionine = 3-methylsulfanyl-L-aspartate(89)-[ribosomal protein uS12]-hydrogen + (sulfur carrier)-H + 5'-deoxyadenosine + L-methionine + A + S-adenosyl-L-homocysteine + 2 H(+). In terms of biological role, catalyzes the methylthiolation of an aspartic acid residue of ribosomal protein uS12. This is Ribosomal protein uS12 methylthiotransferase RimO from Koribacter versatilis (strain Ellin345).